Reading from the N-terminus, the 343-residue chain is Dihydroorotate dehydrogenase (quinone) (343 aa).

Residues 61–65 (AGLDK) and Thr-85 each bind FMN. Lys-65 lines the substrate pocket. 110–114 (NRMGF) serves as a coordination point for substrate. Residues Asn-138 and Asn-171 each contribute to the FMN site. A substrate-binding site is contributed by Asn-171. The active-site Nucleophile is the Ser-174. Asn-176 is a binding site for substrate. FMN-binding residues include Lys-216 and Thr-244. A substrate-binding site is contributed by 245-246 (NT). Residues Gly-267, Gly-296, and 317–318 (YS) contribute to the FMN site.

The protein belongs to the dihydroorotate dehydrogenase family. Type 2 subfamily. As to quaternary structure, monomer. FMN is required as a cofactor.

The protein resides in the cell membrane. The enzyme catalyses (S)-dihydroorotate + a quinone = orotate + a quinol. It participates in pyrimidine metabolism; UMP biosynthesis via de novo pathway; orotate from (S)-dihydroorotate (quinone route): step 1/1. Catalyzes the conversion of dihydroorotate to orotate with quinone as electron acceptor. This is Dihydroorotate dehydrogenase (quinone) from Stutzerimonas stutzeri (strain A1501) (Pseudomonas stutzeri).